A 178-amino-acid chain; its full sequence is Bifunctional protein PyrR (178 aa).

The PRPP-binding signature appears at Val97 to Thr109.

It belongs to the purine/pyrimidine phosphoribosyltransferase family. PyrR subfamily.

It catalyses the reaction UMP + diphosphate = 5-phospho-alpha-D-ribose 1-diphosphate + uracil. Functionally, regulates the transcription of the pyrimidine nucleotide (pyr) operon in response to exogenous pyrimidines. Also displays a weak uracil phosphoribosyltransferase activity which is not physiologically significant. The polypeptide is Bifunctional protein PyrR (Herpetosiphon aurantiacus (strain ATCC 23779 / DSM 785 / 114-95)).